Reading from the N-terminus, the 282-residue chain is Eukaryotic translation initiation factor 3 subunit G (282 aa).

A disordered region spans residues 1–27 (MSSSKSLDWADDEDYGTGLPSIQTFDN). Phosphoserine occurs at positions 160 and 164. Residues 202–280 (ATLRVTNLSD…LILRCEFSKP (79 aa)) form the RRM domain.

The protein belongs to the eIF-3 subunit G family. As to quaternary structure, component of the eukaryotic translation initiation factor 3 (eIF-3) complex. The eIF-3 complex appears to include tif32/eif3a, SPAC25G10.08/eif3b, tif33/eif3c, SPBC4C3.07/eif3f, tif35/eif3g and sum1/eif3i. This set of common subunits may also associate exclusively with either moe1/eif3d and int6/eif3e, or with SPAC821.05/eif3h and SPAC1751.03/eif3m. The eIF-3 complex may also include SPAC3A12.13c/eif3j.

The protein resides in the cytoplasm. In terms of biological role, RNA-binding component of the eukaryotic translation initiation factor 3 (eIF-3) complex, which is involved in protein synthesis of a specialized repertoire of mRNAs and, together with other initiation factors, stimulates binding of mRNA and methionyl-tRNAi to the 40S ribosome. The eIF-3 complex specifically targets and initiates translation of a subset of mRNAs involved in cell proliferation. This subunit can bind 18S rRNA. The polypeptide is Eukaryotic translation initiation factor 3 subunit G (tif35) (Schizosaccharomyces pombe (strain 972 / ATCC 24843) (Fission yeast)).